The sequence spans 403 residues: Dual-specificity RNA methyltransferase RlmN (403 aa).

Glutamate 121 serves as the catalytic Proton acceptor. The Radical SAM core domain maps to 127-375 (ETDRGTLCVS…VRTPRGRDIL (249 aa)). A disulfide bond links cysteine 134 and cysteine 378. 3 residues coordinate [4Fe-4S] cluster: cysteine 141, cysteine 145, and cysteine 148. Residues 204-205 (GE), serine 236, 258-260 (SLH), and asparagine 335 each bind S-adenosyl-L-methionine. The active-site S-methylcysteine intermediate is the cysteine 378.

The protein belongs to the radical SAM superfamily. RlmN family. [4Fe-4S] cluster is required as a cofactor.

It localises to the cytoplasm. The enzyme catalyses adenosine(2503) in 23S rRNA + 2 reduced [2Fe-2S]-[ferredoxin] + 2 S-adenosyl-L-methionine = 2-methyladenosine(2503) in 23S rRNA + 5'-deoxyadenosine + L-methionine + 2 oxidized [2Fe-2S]-[ferredoxin] + S-adenosyl-L-homocysteine. The catalysed reaction is adenosine(37) in tRNA + 2 reduced [2Fe-2S]-[ferredoxin] + 2 S-adenosyl-L-methionine = 2-methyladenosine(37) in tRNA + 5'-deoxyadenosine + L-methionine + 2 oxidized [2Fe-2S]-[ferredoxin] + S-adenosyl-L-homocysteine. In terms of biological role, specifically methylates position 2 of adenine 2503 in 23S rRNA and position 2 of adenine 37 in tRNAs. m2A2503 modification seems to play a crucial role in the proofreading step occurring at the peptidyl transferase center and thus would serve to optimize ribosomal fidelity. The sequence is that of Dual-specificity RNA methyltransferase RlmN from Rhodopseudomonas palustris (strain BisA53).